Reading from the N-terminus, the 194-residue chain is ATP-dependent Clp protease proteolytic subunit 3 (194 aa).

The active-site Nucleophile is the Ser-96. His-121 is an active-site residue.

It belongs to the peptidase S14 family. As to quaternary structure, fourteen ClpP subunits assemble into 2 heptameric rings which stack back to back to give a disk-like structure with a central cavity, resembling the structure of eukaryotic proteasomes.

Its subcellular location is the cytoplasm. The catalysed reaction is Hydrolysis of proteins to small peptides in the presence of ATP and magnesium. alpha-casein is the usual test substrate. In the absence of ATP, only oligopeptides shorter than five residues are hydrolyzed (such as succinyl-Leu-Tyr-|-NHMec, and Leu-Tyr-Leu-|-Tyr-Trp, in which cleavage of the -Tyr-|-Leu- and -Tyr-|-Trp bonds also occurs).. Its function is as follows. Cleaves peptides in various proteins in a process that requires ATP hydrolysis. Has a chymotrypsin-like activity. Plays a major role in the degradation of misfolded proteins. This chain is ATP-dependent Clp protease proteolytic subunit 3, found in Prochlorococcus marinus (strain NATL2A).